We begin with the raw amino-acid sequence, 139 residues long: Peptide methionine sulfoxide reductase MsrB (139 aa).

Positions 14–137 constitute a MsrB domain; it reads DEEWRRELTP…NSISLDFQPE (124 aa). The Zn(2+) site is built by cysteine 53, cysteine 56, cysteine 102, and cysteine 105. The Nucleophile role is filled by cysteine 126.

The protein belongs to the MsrB Met sulfoxide reductase family. The cofactor is Zn(2+).

It catalyses the reaction L-methionyl-[protein] + [thioredoxin]-disulfide + H2O = L-methionyl-(R)-S-oxide-[protein] + [thioredoxin]-dithiol. This Leifsonia xyli subsp. xyli (strain CTCB07) protein is Peptide methionine sulfoxide reductase MsrB.